The sequence spans 284 residues: Elongation factor Ts (284 aa).

Residues 80-83 form an involved in Mg(2+) ion dislocation from EF-Tu region; the sequence is TDFV.

This sequence belongs to the EF-Ts family.

It localises to the cytoplasm. Its function is as follows. Associates with the EF-Tu.GDP complex and induces the exchange of GDP to GTP. It remains bound to the aminoacyl-tRNA.EF-Tu.GTP complex up to the GTP hydrolysis stage on the ribosome. This Neisseria meningitidis serogroup A / serotype 4A (strain DSM 15465 / Z2491) protein is Elongation factor Ts.